Reading from the N-terminus, the 87-residue chain is Putative BTB/POZ domain-containing protein At3g29740 (87 aa).

The BTB domain occupies 24 to 87 (VDVRLKAGDS…KHTELVALVE (64 aa)).

It functions in the pathway protein modification; protein ubiquitination. Functionally, may act as a substrate-specific adapter of an E3 ubiquitin-protein ligase complex (CUL3-RBX1-BTB) which mediates the ubiquitination and subsequent proteasomal degradation of target proteins. The sequence is that of Putative BTB/POZ domain-containing protein At3g29740 from Arabidopsis thaliana (Mouse-ear cress).